We begin with the raw amino-acid sequence, 630 residues long: Replication protein A 70 kDa DNA-binding subunit B (630 aa).

The OB DNA-binding region spans 200 to 282 (IIKVRVTSKG…KTVHNDYEMT (83 aa)). The C4-type zinc finger occupies 496 to 516 (CKTCNKKVTEAIGSGYWCEGC).

It belongs to the replication factor A protein 1 family. As to quaternary structure, heterotrimer of RPA1, RPA2 and RPA3 (canonical replication protein A complex). Interacts with RPA2A. Expressed in root tips, roots, shoot apical meristem (SAM) and young leaves, and at lower levels in mature leaves, flag leaves and ears.

The protein localises to the nucleus. Functionally, component of the replication protein A complex (RPA) required for DNA recombination, repair and replication. The activity of RPA is mediated by single-stranded DNA binding and protein interactions. Probably involved in repair of double-strand DNA breaks (DSBs) induced by genotoxic stresses. This Oryza sativa subsp. japonica (Rice) protein is Replication protein A 70 kDa DNA-binding subunit B (RPA1B).